A 104-amino-acid chain; its full sequence is Large ribosomal subunit protein uL24 (104 aa).

The protein belongs to the universal ribosomal protein uL24 family. As to quaternary structure, part of the 50S ribosomal subunit.

In terms of biological role, one of two assembly initiator proteins, it binds directly to the 5'-end of the 23S rRNA, where it nucleates assembly of the 50S subunit. Its function is as follows. One of the proteins that surrounds the polypeptide exit tunnel on the outside of the subunit. The chain is Large ribosomal subunit protein uL24 from Pseudomonas fluorescens (strain SBW25).